We begin with the raw amino-acid sequence, 124 residues long: uncharacterized protein (124 aa).

A helical transmembrane segment spans residues 70-90 (LLYLALVLLLVVILSTAFFSI).

Its subcellular location is the membrane. This is an uncharacterized protein from Saccharomyces cerevisiae (strain ATCC 204508 / S288c) (Baker's yeast).